We begin with the raw amino-acid sequence, 367 residues long: Cobalt-precorrin-5B C(1)-methyltransferase (367 aa).

The protein belongs to the CbiD family.

The enzyme catalyses Co-precorrin-5B + S-adenosyl-L-methionine = Co-precorrin-6A + S-adenosyl-L-homocysteine. Its pathway is cofactor biosynthesis; adenosylcobalamin biosynthesis; cob(II)yrinate a,c-diamide from sirohydrochlorin (anaerobic route): step 6/10. In terms of biological role, catalyzes the methylation of C-1 in cobalt-precorrin-5B to form cobalt-precorrin-6A. The chain is Cobalt-precorrin-5B C(1)-methyltransferase from Leptospira interrogans serogroup Icterohaemorrhagiae serovar copenhageni (strain Fiocruz L1-130).